Consider the following 586-residue polypeptide: 25S rRNA (adenine-N(1))-methyltransferase (586 aa).

Disordered stretches follow at residues 23-229 (GTAP…LTPL) and 536-573 (GKCV…EVKD). Over residues 25-41 (APAAPAPASAPAVSSSK) the composition is skewed to low complexity. Basic and acidic residues predominate over residues 65 to 83 (LWEKVIEQKKEGVADGVKK). Positions 99-108 (KLSNSNNDGN) are enriched in polar residues. The segment covering 114–123 (NNKKKNKNKN) has biased composition (basic residues). A compositionally biased stretch (acidic residues) spans 144–163 (GEEDEDDNNDDADEWEGIDE). Over residues 164–182 (DEKHASSEKPTPKKDDKKQ) the composition is skewed to basic and acidic residues. Residues 183–192 (QQLQQQQQQK) are compositionally biased toward low complexity. Over residues 204-213 (NGTTSNWQQD) the composition is skewed to polar residues. Positions 217–229 (PKTATPAPKLTPL) are enriched in low complexity. Residues 539–549 (VPKDGQEDTTK) are compositionally biased toward basic and acidic residues. Residues 550-559 (NKKGGQKPKP) are compositionally biased toward basic residues.

The protein belongs to the methyltransferase superfamily. RRP8 family.

The protein localises to the nucleus. It localises to the nucleolus. S-adenosyl-L-methionine-dependent methyltransferase that specifically methylates the N(1) position of a conserved adenine in helix 25.1 in 25S rRNA. Required both for ribosomal 40S and 60S subunits biogenesis. Required for efficient pre-rRNA cleavage at site A2. The polypeptide is 25S rRNA (adenine-N(1))-methyltransferase (RPR8) (Chaetomium thermophilum (strain DSM 1495 / CBS 144.50 / IMI 039719) (Thermochaetoides thermophila)).